The sequence spans 172 residues: Translationally-controlled tumor protein homolog (172 aa).

Residues 1–172 (MIIFKDLLTG…FKHGLDEEKV (172 aa)) enclose the TCTP domain.

This sequence belongs to the TCTP family. Expressed by the venom gland.

The protein localises to the secreted. Functionally, venom protein that causes edema, enhances vascular permeability and is likely related to the inflammatory activity of the venom. The chain is Translationally-controlled tumor protein homolog from Loxosceles intermedia (Brown spider).